A 183-amino-acid chain; its full sequence is Ribosome rescue factor SmrB (183 aa).

The 76-residue stretch at 98 to 173 (LDLHGLTQQQ…GDAALLVLIE (76 aa)) folds into the Smr domain.

The protein belongs to the SmrB family. As to quaternary structure, associates with collided ribosomes, but not with correctly translating polysomes.

Its function is as follows. Acts as a ribosome collision sensor. Detects stalled/collided disomes (pairs of ribosomes where the leading ribosome is stalled and a second ribosome has collided with it) and endonucleolytically cleaves mRNA at the 5' boundary of the stalled ribosome. Stalled/collided disomes form a new interface (primarily via the 30S subunits) that binds SmrB. Cleaved mRNA becomes available for tmRNA ligation, leading to ribosomal subunit dissociation and rescue of stalled ribosomes. The chain is Ribosome rescue factor SmrB from Klebsiella pneumoniae (strain 342).